A 425-amino-acid polypeptide reads, in one-letter code: Protein CLP1 homolog (425 aa).

ATP-binding positions include Glu-18, Lys-59, and 121–126; that span reads DVGKST.

The protein belongs to the Clp1 family. Clp1 subfamily.

Its subcellular location is the nucleus. Its function is as follows. Required for endonucleolytic cleavage during polyadenylation-dependent pre-mRNA 3'-end formation. The chain is Protein CLP1 homolog (cbc) from Drosophila mojavensis (Fruit fly).